The primary structure comprises 239 residues: ATP-dependent dethiobiotin synthetase BioD (239 aa).

Residue 15 to 20 coordinates ATP; sequence EIGKTF. T19 serves as a coordination point for Mg(2+). K40 is an active-site residue. Residues D57, 118 to 121, 178 to 179, and 211 to 213 each bind ATP; these read EGVG, NH, and AHL. Residues D57 and E118 each coordinate Mg(2+).

The protein belongs to the dethiobiotin synthetase family. As to quaternary structure, homodimer. Mg(2+) is required as a cofactor.

It localises to the cytoplasm. The catalysed reaction is (7R,8S)-7,8-diammoniononanoate + CO2 + ATP = (4R,5S)-dethiobiotin + ADP + phosphate + 3 H(+). The protein operates within cofactor biosynthesis; biotin biosynthesis; biotin from 7,8-diaminononanoate: step 1/2. Catalyzes a mechanistically unusual reaction, the ATP-dependent insertion of CO2 between the N7 and N8 nitrogen atoms of 7,8-diaminopelargonic acid (DAPA, also called 7,8-diammoniononanoate) to form a ureido ring. This Burkholderia ambifaria (strain MC40-6) protein is ATP-dependent dethiobiotin synthetase BioD.